The sequence spans 268 residues: Shikimate dehydrogenase (NADP(+)) (268 aa).

Shikimate-binding positions include 13-15 (SLS) and Thr60. Catalysis depends on Lys64, which acts as the Proton acceptor. An NADP(+)-binding site is contributed by Glu76. Shikimate-binding residues include Asn85 and Asp100. Residues 124–128 (GAGGA), 148–153 (NRTMAR), and Ile209 each bind NADP(+). Tyr211 is a binding site for shikimate. Gly232 is an NADP(+) binding site.

The protein belongs to the shikimate dehydrogenase family. As to quaternary structure, homodimer.

It carries out the reaction shikimate + NADP(+) = 3-dehydroshikimate + NADPH + H(+). It participates in metabolic intermediate biosynthesis; chorismate biosynthesis; chorismate from D-erythrose 4-phosphate and phosphoenolpyruvate: step 4/7. In terms of biological role, involved in the biosynthesis of the chorismate, which leads to the biosynthesis of aromatic amino acids. Catalyzes the reversible NADPH linked reduction of 3-dehydroshikimate (DHSA) to yield shikimate (SA). In Staphylococcus aureus (strain USA300), this protein is Shikimate dehydrogenase (NADP(+)).